An 833-amino-acid chain; its full sequence is MutS protein homolog 5 (833 aa).

Positions 1–45 (MAFRATPGRTPPGPGPRSGIPSASFPSPQPPMAGPGGIEEEDEEE) are disordered. 591–598 (GPNSSGKS) lines the ATP pocket.

This sequence belongs to the DNA mismatch repair MutS family. In terms of assembly, heterooligomer of MSH4 and MSH5. Interacts with HJURP. Interacts with REDIC1.

Its function is as follows. Involved in DNA mismatch repair and meiotic recombination processes. Facilitates crossovers between homologs during meiosis. The polypeptide is MutS protein homolog 5 (Msh5) (Mus musculus (Mouse)).